We begin with the raw amino-acid sequence, 115 residues long: NADH-ubiquinone oxidoreductase chain 3 (115 aa).

3 helical membrane passes run 3 to 23 (IMLT…IAFW), 55 to 75 (FFLV…LLPL), and 86 to 106 (TMLT…AYEW).

The protein belongs to the complex I subunit 3 family. In terms of assembly, core subunit of respiratory chain NADH dehydrogenase (Complex I) which is composed of 45 different subunits. Interacts with TMEM186. Interacts with TMEM242.

Its subcellular location is the mitochondrion inner membrane. It catalyses the reaction a ubiquinone + NADH + 5 H(+)(in) = a ubiquinol + NAD(+) + 4 H(+)(out). Its function is as follows. Core subunit of the mitochondrial membrane respiratory chain NADH dehydrogenase (Complex I) which catalyzes electron transfer from NADH through the respiratory chain, using ubiquinone as an electron acceptor. Essential for the catalytic activity of complex I. The polypeptide is NADH-ubiquinone oxidoreductase chain 3 (Sus scrofa (Pig)).